The following is a 331-amino-acid chain: Tetraspanin-10 (331 aa).

A disordered region spans residues 1-34 (MKEEECSPLLSQDTAGREHPLTRNSPPTANIPCP). At 1–76 (MKEEECSPLL…LSTGSNCVKY (76 aa)) the chain is on the cytoplasmic side. The helical transmembrane segment at 77–97 (LIFLSNFLFSLPSLLALAAGL) threads the bilayer. Over 98–120 (WGLTVKRSQGIGWGGPVPTDPML) the chain is Extracellular. A helical transmembrane segment spans residues 121–141 (MLVLGGLVVSVVSLSGCLGAF). Topologically, residues 142-152 (CENSCLLHWYC) are cytoplasmic. Residues 153-173 (GAVLFCLALEALAGVLMVTLW) traverse the membrane as a helical segment. Over 174–331 (KPLQDSLKYT…AAEDIEAGPL (158 aa)) the chain is Extracellular. 4 disulfide bridges follow: Cys-210/Cys-277, Cys-211/Cys-241, Cys-227/Cys-235, and Cys-242/Cys-256. An N-linked (GlcNAc...) asparagine glycan is attached at Asn-226.

The protein belongs to the tetraspanin (TM4SF) family. As to quaternary structure, interacts with ADAM10.

Its subcellular location is the cell membrane. Its function is as follows. Part of TspanC8 subgroup, composed of 6 members that interact with the transmembrane metalloprotease ADAM10. This interaction is required for ADAM10 exit from the endoplasmic reticulum and for enzymatic maturation and trafficking to the cell surface as well as substrate specificity. Different TspanC8/ADAM10 complexes have distinct substrates. The polypeptide is Tetraspanin-10 (Tspan10) (Mus musculus (Mouse)).